A 461-amino-acid chain; its full sequence is MNREIYDFVAIGIGPFNLSLASLSAPLRGVRTLFLDKKSGFDWHPGMLIETSTLQNPFLADLVSLADPRSEYSYLNYCKLTNRIYSYYMRENHYLSRAEYTRYCQWVAARLPNLRFGCDVQGVLHDPESHSYLVTGQHTMSGQRFMFRCRKLVLGLGSQPYLPACCDRRAAPFIHSADYLRHKYELQGRASITIVGSGQSAAEVFHDLLRESGRHDYSLAWITRSPRFFQMENTKLTLELISPDYTEYFHDLPEARRQEILTQQNSLYKGINASLINQIYDLLDEKVHDGDNRYTLLTNSELRACRYDPLQERFQLDFQHLDCDRPFSHATDGLVLATGYSHEIPACINPIHDRIAWNADGSYRIGRNYAIDHEGSEIFVQNTGLLSHGVTNPDLGFCCYRNSQILRELTGTEHYRIETRTALQEFSPPADGVLKHRPARRAERGPTVAARPLMDIHRATL.

Position 9–15 (9–15 (VAIGIGP)) interacts with FAD.

It belongs to the lysine N(6)-hydroxylase/L-ornithine N(5)-oxygenase family. It depends on FAD as a cofactor.

The protein operates within siderophore biosynthesis; alcaligin biosynthesis. The polypeptide is Alcaligin biosynthesis enzyme (alcA) (Bordetella bronchiseptica (strain ATCC BAA-588 / NCTC 13252 / RB50) (Alcaligenes bronchisepticus)).